A 949-amino-acid polypeptide reads, in one-letter code: Glycine dehydrogenase (decarboxylating) (949 aa).

The residue at position 704 (Lys704) is an N6-(pyridoxal phosphate)lysine.

The protein belongs to the GcvP family. In terms of assembly, the glycine cleavage system is composed of four proteins: P, T, L and H. Pyridoxal 5'-phosphate serves as cofactor.

It catalyses the reaction N(6)-[(R)-lipoyl]-L-lysyl-[glycine-cleavage complex H protein] + glycine + H(+) = N(6)-[(R)-S(8)-aminomethyldihydrolipoyl]-L-lysyl-[glycine-cleavage complex H protein] + CO2. In terms of biological role, the glycine cleavage system catalyzes the degradation of glycine. The P protein binds the alpha-amino group of glycine through its pyridoxal phosphate cofactor; CO(2) is released and the remaining methylamine moiety is then transferred to the lipoamide cofactor of the H protein. The protein is Glycine dehydrogenase (decarboxylating) of Bacteroides thetaiotaomicron (strain ATCC 29148 / DSM 2079 / JCM 5827 / CCUG 10774 / NCTC 10582 / VPI-5482 / E50).